The chain runs to 914 residues: Coatomer subunit beta' (914 aa).

7 WD repeats span residues 13-54 (SRSD…KDFE), 55-94 (VCDV…KVHS), 97-136 (AHSD…ACQR), 140-180 (GHTH…ANFT), 183-224 (GHEK…CVQT), 227-266 (GHAQ…LETC), and 352-390 (ACEI…NKAF).

This sequence belongs to the WD repeat COPB2 family. Oligomeric complex that consists of at least the alpha, beta, beta', gamma, delta, epsilon and zeta subunits.

Its subcellular location is the cytoplasm. The protein localises to the golgi apparatus membrane. It is found in the cytoplasmic vesicle. It localises to the COPI-coated vesicle membrane. The coatomer is a cytosolic protein complex that binds to dilysine motifs and reversibly associates with Golgi non-clathrin-coated vesicles, which further mediate biosynthetic protein transport from the ER, via the Golgi up to the trans Golgi network. Coatomer complex is required for budding from Golgi membranes, and is essential for the retrograde Golgi-to-ER transport of dilysine-tagged proteins. This Drosophila melanogaster (Fruit fly) protein is Coatomer subunit beta'.